The following is a 318-amino-acid chain: Dehydration-responsive element-binding protein 2E (318 aa).

The span at 1–15 (MESYGRKRAWKKGPT) shows a compositional bias: basic residues. The tract at residues 1 to 24 (MESYGRKRAWKKGPTRGKGGPQNA) is disordered. A DNA-binding region (AP2/ERF) is located at residues 27–84 (EYRGVRQRTWGKWVAEIREPNKRTRLWLGSFATAEEAALAYDEAARRLYGPDAFLNLP). A disordered region spans residues 140 to 178 (ELKNSSSSPTKPPPRTPTRANPPPPPLPTSSPCSTVTNS). Positions 149-168 (TKPPPRTPTRANPPPPPLPT) are enriched in pro residues.

The protein belongs to the AP2/ERF transcription factor family. ERF subfamily.

The protein localises to the nucleus. Its function is as follows. Probable transcriptional activator that binds to the DNA sequence 5'-[AG]CCGAC-3' of the cis-acting dehydration-responsive element (DRE). This Oryza sativa subsp. japonica (Rice) protein is Dehydration-responsive element-binding protein 2E (DREB2E).